A 628-amino-acid chain; its full sequence is 3-hydroxy-3-methylglutaryl-coenzyme A reductase 2 (628 aa).

The next 2 membrane-spanning stretches (helical) occupy residues 38-58 (PLYL…YFLL) and 78-98 (EIVA…FFGI). Positions 99 to 212 (DFVQSLIIRP…HEKTVIVTTE (114 aa)) are linker. The N-linked (GlcNAc...) asparagine glycan is linked to N153. Residues 213-628 (EDEEIIKSVV…SSKDMSNLSS (416 aa)) are catalytic. E307 serves as the catalytic Charge relay system. The N-linked (GlcNAc...) asparagine glycan is linked to N371. The active-site Charge relay system is the K439. A glycan (N-linked (GlcNAc...) asparagine) is linked at N484. D515 (charge relay system) is an active-site residue. Residue H613 is the Proton donor of the active site. Residues N617 and N625 are each glycosylated (N-linked (GlcNAc...) asparagine).

Belongs to the HMG-CoA reductase family.

Its subcellular location is the endoplasmic reticulum membrane. The protein resides in the mitochondrion membrane. It is found in the plastid membrane. It carries out the reaction (R)-mevalonate + 2 NADP(+) + CoA = (3S)-3-hydroxy-3-methylglutaryl-CoA + 2 NADPH + 2 H(+). It functions in the pathway metabolic intermediate biosynthesis; (R)-mevalonate biosynthesis; (R)-mevalonate from acetyl-CoA: step 3/3. Functionally, catalyzes the synthesis of mevalonate. The specific precursor of all isoprenoid compounds present in plants. The protein is 3-hydroxy-3-methylglutaryl-coenzyme A reductase 2 (HMG2) of Gossypium hirsutum (Upland cotton).